The chain runs to 149 residues: Large ribosomal subunit protein uL11 (149 aa).

The protein belongs to the universal ribosomal protein uL11 family. Part of the ribosomal stalk of the 50S ribosomal subunit. Interacts with L10 and the large rRNA to form the base of the stalk. L10 forms an elongated spine to which L12 dimers bind in a sequential fashion forming a multimeric L10(L12)X complex. Post-translationally, one or more lysine residues are methylated.

Its function is as follows. Forms part of the ribosomal stalk which helps the ribosome interact with GTP-bound translation factors. The chain is Large ribosomal subunit protein uL11 from Methylobacterium nodulans (strain LMG 21967 / CNCM I-2342 / ORS 2060).